A 102-amino-acid chain; its full sequence is Large ribosomal subunit protein bL21 (102 aa).

It belongs to the bacterial ribosomal protein bL21 family. As to quaternary structure, part of the 50S ribosomal subunit. Contacts protein L20.

Its function is as follows. This protein binds to 23S rRNA in the presence of protein L20. The chain is Large ribosomal subunit protein bL21 from Exiguobacterium sibiricum (strain DSM 17290 / CCUG 55495 / CIP 109462 / JCM 13490 / 255-15).